We begin with the raw amino-acid sequence, 158 residues long: S-ribosylhomocysteine lyase (158 aa).

3 residues coordinate Fe cation: His-57, His-61, and Cys-125.

It belongs to the LuxS family. In terms of assembly, homodimer. Requires Fe cation as cofactor.

The catalysed reaction is S-(5-deoxy-D-ribos-5-yl)-L-homocysteine = (S)-4,5-dihydroxypentane-2,3-dione + L-homocysteine. Involved in the synthesis of autoinducer 2 (AI-2) which is secreted by bacteria and is used to communicate both the cell density and the metabolic potential of the environment. The regulation of gene expression in response to changes in cell density is called quorum sensing. Catalyzes the transformation of S-ribosylhomocysteine (RHC) to homocysteine (HC) and 4,5-dihydroxy-2,3-pentadione (DPD). The chain is S-ribosylhomocysteine lyase from Deinococcus radiodurans (strain ATCC 13939 / DSM 20539 / JCM 16871 / CCUG 27074 / LMG 4051 / NBRC 15346 / NCIMB 9279 / VKM B-1422 / R1).